A 419-amino-acid polypeptide reads, in one-letter code: Gamma-glutamyl phosphate reductase (419 aa).

Belongs to the gamma-glutamyl phosphate reductase family.

The protein resides in the cytoplasm. The catalysed reaction is L-glutamate 5-semialdehyde + phosphate + NADP(+) = L-glutamyl 5-phosphate + NADPH + H(+). It functions in the pathway amino-acid biosynthesis; L-proline biosynthesis; L-glutamate 5-semialdehyde from L-glutamate: step 2/2. Its function is as follows. Catalyzes the NADPH-dependent reduction of L-glutamate 5-phosphate into L-glutamate 5-semialdehyde and phosphate. The product spontaneously undergoes cyclization to form 1-pyrroline-5-carboxylate. The chain is Gamma-glutamyl phosphate reductase from Yersinia pestis.